A 156-amino-acid polypeptide reads, in one-letter code: 6,7-dimethyl-8-ribityllumazine synthase (156 aa).

5-amino-6-(D-ribitylamino)uracil is bound by residues Phe22, 57 to 59, and 81 to 83; these read AYE and TVI. 86–87 provides a ligand contact to (2S)-2-hydroxy-3-oxobutyl phosphate; sequence GT. Catalysis depends on His89, which acts as the Proton donor. A 5-amino-6-(D-ribitylamino)uracil-binding site is contributed by Phe114. Arg128 lines the (2S)-2-hydroxy-3-oxobutyl phosphate pocket.

It belongs to the DMRL synthase family. Forms an icosahedral capsid composed of 60 subunits, arranged as a dodecamer of pentamers.

The catalysed reaction is (2S)-2-hydroxy-3-oxobutyl phosphate + 5-amino-6-(D-ribitylamino)uracil = 6,7-dimethyl-8-(1-D-ribityl)lumazine + phosphate + 2 H2O + H(+). Its pathway is cofactor biosynthesis; riboflavin biosynthesis; riboflavin from 2-hydroxy-3-oxobutyl phosphate and 5-amino-6-(D-ribitylamino)uracil: step 1/2. In terms of biological role, catalyzes the formation of 6,7-dimethyl-8-ribityllumazine by condensation of 5-amino-6-(D-ribitylamino)uracil with 3,4-dihydroxy-2-butanone 4-phosphate. This is the penultimate step in the biosynthesis of riboflavin. The polypeptide is 6,7-dimethyl-8-ribityllumazine synthase (Edwardsiella ictaluri (strain 93-146)).